A 135-amino-acid polypeptide reads, in one-letter code: uncharacterized protein (135 aa).

Residues 2-71 enclose the HTH merR-type domain; it reads TYTTAKAAEK…LKDIKRFAEC (70 aa). A DNA-binding region (H-T-H motif) is located at residues 5–24; the sequence is TAKAAEKIGISAYTLRFYDK.

This is an uncharacterized protein from Haemophilus influenzae (strain ATCC 51907 / DSM 11121 / KW20 / Rd).